We begin with the raw amino-acid sequence, 309 residues long: HPr kinase/phosphorylase (309 aa).

Active-site residues include H138 and K159. 153–160 (GQSGVGKS) is an ATP binding site. S160 contributes to the Mg(2+) binding site. The Proton acceptor; for phosphorylation activity. Proton donor; for dephosphorylation activity role is filled by D177. The interval 201 to 210 (LEIRGLGIIN) is important for the catalytic mechanism of both phosphorylation and dephosphorylation. E202 is a binding site for Mg(2+). R243 is a catalytic residue. The tract at residues 264–269 (PVRPGR) is important for the catalytic mechanism of dephosphorylation.

Belongs to the HPrK/P family. In terms of assembly, homohexamer. It depends on Mg(2+) as a cofactor.

It carries out the reaction [HPr protein]-L-serine + ATP = [HPr protein]-O-phospho-L-serine + ADP + H(+). The enzyme catalyses [HPr protein]-O-phospho-L-serine + phosphate + H(+) = [HPr protein]-L-serine + diphosphate. Functionally, catalyzes the ATP- as well as the pyrophosphate-dependent phosphorylation of a specific serine residue in HPr, a phosphocarrier protein of the phosphoenolpyruvate-dependent sugar phosphotransferase system (PTS). HprK/P also catalyzes the pyrophosphate-producing, inorganic phosphate-dependent dephosphorylation (phosphorolysis) of seryl-phosphorylated HPr (P-Ser-HPr). The two antagonistic activities of HprK/P are regulated by several intracellular metabolites, which change their concentration in response to the absence or presence of rapidly metabolisable carbon sources (glucose, fructose, etc.) in the growth medium. Also phosphorylates/dephosphorylates the HPr-like catabolite repression protein crh on a specific serine residue. Therefore, by controlling the phosphorylation state of HPr and crh, HPrK/P is a sensor enzyme that plays a major role in the regulation of carbon metabolism and sugar transport: it mediates carbon catabolite repression (CCR), and regulates PTS-catalyzed carbohydrate uptake and inducer exclusion. This Bacillus mycoides (strain KBAB4) (Bacillus weihenstephanensis) protein is HPr kinase/phosphorylase.